Consider the following 372-residue polypeptide: N-methyl-L-tryptophan oxidase (372 aa).

4–34 (DLIIIGSGSVGAAAGYYATRAGLNVLMTDAH) provides a ligand contact to FAD. Cys-308 carries the S-8alpha-FAD cysteine modification.

This sequence belongs to the MSOX/MTOX family. MTOX subfamily. In terms of assembly, monomer. Requires FAD as cofactor.

The catalysed reaction is N(alpha)-methyl-L-tryptophan + O2 + H2O = L-tryptophan + formaldehyde + H2O2. Its function is as follows. Catalyzes the oxidative demethylation of N-methyl-L-tryptophan. The chain is N-methyl-L-tryptophan oxidase from Shigella dysenteriae serotype 1 (strain Sd197).